The sequence spans 338 residues: Citramalyl-CoA lyase, mitochondrial (338 aa).

A mitochondrion-targeting transit peptide spans M1–K20. Positions 48, 55, and 59 each coordinate substrate. K55, K59, and K64 each carry N6-acetyllysine. N6-acetyllysine; alternate occurs at positions 80 and 90. K80 and K90 each carry N6-succinyllysine; alternate. R105 lines the substrate pocket. Mg(2+)-binding residues include E169 and D204. Position 270–271 (I270–H271) interacts with substrate. K307 bears the N6-succinyllysine mark. D318 is a catalytic residue.

Belongs to the HpcH/HpaI aldolase family. Citrate lyase beta subunit-like subfamily. In terms of assembly, homotrimer. Mg(2+) is required as a cofactor.

Its subcellular location is the mitochondrion. It catalyses the reaction glyoxylate + acetyl-CoA + H2O = (S)-malate + CoA + H(+). The catalysed reaction is propanoyl-CoA + glyoxylate + H2O = 3-methylmalate + CoA + H(+). The enzyme catalyses (3S)-citramalyl-CoA = pyruvate + acetyl-CoA. It carries out the reaction (S)-malyl-CoA + H2O = (S)-malate + CoA + H(+). Mitochondrial citramalyl-CoA lyase indirectly involved in the vitamin B12 metabolism. Converts citramalyl-CoA into acetyl-CoA and pyruvate in the C5-dicarboxylate catabolism pathway. The C5-dicarboxylate catabolism pathway is required to detoxify itaconate, a vitamin B12-poisoning metabolite. Also acts as a malate synthase in vitro, converting glyoxylate and acetyl-CoA to malate. Also displays malyl-CoA thioesterase activity. Also acts as a beta-methylmalate synthase in vitro, by mediating conversion of glyoxylate and propionyl-CoA to beta-methylmalate. Also has very weak citramalate synthase activity in vitro. The sequence is that of Citramalyl-CoA lyase, mitochondrial (Clybl) from Rattus norvegicus (Rat).